The following is a 223-amino-acid chain: Cytidylate kinase (223 aa).

Position 10–18 (10–18 (GPAGTGKSS)) interacts with ATP.

The protein belongs to the cytidylate kinase family. Type 1 subfamily.

The protein localises to the cytoplasm. The catalysed reaction is CMP + ATP = CDP + ADP. The enzyme catalyses dCMP + ATP = dCDP + ADP. The sequence is that of Cytidylate kinase from Mycobacterium leprae (strain Br4923).